The chain runs to 211 residues: Histidine biosynthesis bifunctional protein HisIE (211 aa).

The tract at residues Met-1–Ile-118 is phosphoribosyl-AMP cyclohydrolase. Residues Ile-119–Glu-211 form a phosphoribosyl-ATP pyrophosphohydrolase region.

In the N-terminal section; belongs to the PRA-CH family. The protein in the C-terminal section; belongs to the PRA-PH family.

It is found in the cytoplasm. The catalysed reaction is 1-(5-phospho-beta-D-ribosyl)-ATP + H2O = 1-(5-phospho-beta-D-ribosyl)-5'-AMP + diphosphate + H(+). The enzyme catalyses 1-(5-phospho-beta-D-ribosyl)-5'-AMP + H2O = 1-(5-phospho-beta-D-ribosyl)-5-[(5-phospho-beta-D-ribosylamino)methylideneamino]imidazole-4-carboxamide. Its pathway is amino-acid biosynthesis; L-histidine biosynthesis; L-histidine from 5-phospho-alpha-D-ribose 1-diphosphate: step 2/9. The protein operates within amino-acid biosynthesis; L-histidine biosynthesis; L-histidine from 5-phospho-alpha-D-ribose 1-diphosphate: step 3/9. The polypeptide is Histidine biosynthesis bifunctional protein HisIE (hisI) (Halalkalibacterium halodurans (strain ATCC BAA-125 / DSM 18197 / FERM 7344 / JCM 9153 / C-125) (Bacillus halodurans)).